Consider the following 264-residue polypeptide: MQIKPLTPIDRSSKTSEILVQLKNIEVTFAEKQALQNINLTIYKNSITTIVGPNGGGKSTLLKVLLKLLKPSQGQVIHQPGLKIGYVPQKLHLDHSMPITVKKFLSLKPNCSTPSIAAALTLFSIEHLAQNSMQKLSGGELQRVLLARAILDRPQLLVLDEPMQGVDISGQTELYQLLTQTRTWLNCAIIMVSHDLNIVMANTDEVLCVNKHICCAGSPELVSNDPNFIHFFGDQFAKNVAFYSHRHNHHHNLHGDICKGKCEC.

The region spanning 20–235 (VQLKNIEVTF…PNFIHFFGDQ (216 aa)) is the ABC transporter domain. 52-59 (GPNGGGKS) lines the ATP pocket.

This sequence belongs to the ABC transporter superfamily. Zinc importer (TC 3.A.1.15.5) family. The complex is composed of two ATP-binding proteins (ZnuC), two transmembrane proteins (ZnuB) and a solute-binding protein (ZnuA).

The protein localises to the cell inner membrane. The catalysed reaction is Zn(2+)(out) + ATP(in) + H2O(in) = Zn(2+)(in) + ADP(in) + phosphate(in) + H(+)(in). In terms of biological role, part of the ABC transporter complex ZnuABC involved in zinc import. Responsible for energy coupling to the transport system. This is Zinc import ATP-binding protein ZnuC from Haemophilus ducreyi (strain 35000HP / ATCC 700724).